Consider the following 279-residue polypeptide: Ribonuclease Z (279 aa).

Zn(2+)-binding residues include H61, H63, D65, H66, H153, D176, and H240. D65 serves as the catalytic Proton acceptor.

It belongs to the RNase Z family. In terms of assembly, homodimer. The cofactor is Zn(2+).

The enzyme catalyses Endonucleolytic cleavage of RNA, removing extra 3' nucleotides from tRNA precursor, generating 3' termini of tRNAs. A 3'-hydroxy group is left at the tRNA terminus and a 5'-phosphoryl group is left at the trailer molecule.. In terms of biological role, zinc phosphodiesterase, which displays some tRNA 3'-processing endonuclease activity. Probably involved in tRNA maturation, by removing a 3'-trailer from precursor tRNA. The sequence is that of Ribonuclease Z from Mycobacterium marinum (strain ATCC BAA-535 / M).